Reading from the N-terminus, the 442-residue chain is Ribosomal protein uS12 methylthiotransferase RimO (442 aa).

The 111-residue stretch at 8 to 118 (PKVGFVSLGC…VLGHVHKYVA (111 aa)) folds into the MTTase N-terminal domain. [4Fe-4S] cluster is bound by residues Cys17, Cys53, Cys82, Cys150, Cys154, and Cys157. Residues 136 to 373 (LTPRHYAYLK…MELQQQVSIR (238 aa)) form the Radical SAM core domain. Residues 376 to 442 (ARKVGKEMTV…EYDLWASLIG (67 aa)) enclose the TRAM domain.

The protein belongs to the methylthiotransferase family. RimO subfamily. [4Fe-4S] cluster serves as cofactor.

The protein localises to the cytoplasm. The enzyme catalyses L-aspartate(89)-[ribosomal protein uS12]-hydrogen + (sulfur carrier)-SH + AH2 + 2 S-adenosyl-L-methionine = 3-methylsulfanyl-L-aspartate(89)-[ribosomal protein uS12]-hydrogen + (sulfur carrier)-H + 5'-deoxyadenosine + L-methionine + A + S-adenosyl-L-homocysteine + 2 H(+). In terms of biological role, catalyzes the methylthiolation of an aspartic acid residue of ribosomal protein uS12. This is Ribosomal protein uS12 methylthiotransferase RimO from Aeromonas salmonicida (strain A449).